The following is a 264-amino-acid chain: Acyl-[acyl-carrier-protein]--UDP-N-acetylglucosamine O-acyltransferase (264 aa).

This sequence belongs to the transferase hexapeptide repeat family. LpxA subfamily. Homotrimer.

It localises to the cytoplasm. The catalysed reaction is a (3R)-hydroxyacyl-[ACP] + UDP-N-acetyl-alpha-D-glucosamine = a UDP-3-O-[(3R)-3-hydroxyacyl]-N-acetyl-alpha-D-glucosamine + holo-[ACP]. The protein operates within glycolipid biosynthesis; lipid IV(A) biosynthesis; lipid IV(A) from (3R)-3-hydroxytetradecanoyl-[acyl-carrier-protein] and UDP-N-acetyl-alpha-D-glucosamine: step 1/6. In terms of biological role, involved in the biosynthesis of lipid A, a phosphorylated glycolipid that anchors the lipopolysaccharide to the outer membrane of the cell. The sequence is that of Acyl-[acyl-carrier-protein]--UDP-N-acetylglucosamine O-acyltransferase from Rickettsia canadensis (strain McKiel).